Here is a 197-residue protein sequence, read N- to C-terminus: Putative methyltransferase Mtx subunit A (197 aa).

The protein belongs to the MtrA family. In terms of assembly, may be part of a complex composed of 3 subunits; MtxA, MtxH and MtxX.

This is Putative methyltransferase Mtx subunit A (mtxA) from Methanosarcina acetivorans (strain ATCC 35395 / DSM 2834 / JCM 12185 / C2A).